The chain runs to 91 residues: Large ribosomal subunit protein bL31 (91 aa).

Residues 62 to 91 (RRKYSGTKPQQTAKGKKAAPKSTPKTNKKG) form a disordered region.

It belongs to the bacterial ribosomal protein bL31 family. Type A subfamily. In terms of assembly, part of the 50S ribosomal subunit.

Its function is as follows. Binds the 23S rRNA. This Thermosynechococcus vestitus (strain NIES-2133 / IAM M-273 / BP-1) protein is Large ribosomal subunit protein bL31.